A 906-amino-acid polypeptide reads, in one-letter code: Protein translocase subunit SecA (906 aa).

ATP contacts are provided by residues Q86, G104–T108, and D499. A disordered region spans residues P863–N887. Zn(2+) contacts are provided by C890, C892, C901, and H902.

The protein belongs to the SecA family. As to quaternary structure, monomer and homodimer. Part of the essential Sec protein translocation apparatus which comprises SecA, SecYEG and auxiliary proteins SecDF-YajC and YidC. Zn(2+) is required as a cofactor.

It is found in the cell inner membrane. Its subcellular location is the cytoplasm. It catalyses the reaction ATP + H2O + cellular proteinSide 1 = ADP + phosphate + cellular proteinSide 2.. Its function is as follows. Part of the Sec protein translocase complex. Interacts with the SecYEG preprotein conducting channel. Has a central role in coupling the hydrolysis of ATP to the transfer of proteins into and across the cell membrane, serving both as a receptor for the preprotein-SecB complex and as an ATP-driven molecular motor driving the stepwise translocation of polypeptide chains across the membrane. The chain is Protein translocase subunit SecA from Rickettsia rickettsii (strain Iowa).